A 647-amino-acid chain; its full sequence is Phosphatidylinositol polyphosphate 5-phosphatase type IV (647 aa).

Disordered stretches follow at residues 1–80, 101–131, and 177–196; these read MPSK…QPPI, RGSQ…PAYS, and HRDA…HASH. Copy 1 of the repeat occupies 52–55; the sequence is PMPP. Residues 52–243 form a 3 X 4 AA repeats of P-X-X-P region; that stretch reads PMPPFSIPAK…AHSNLGPSRP (192 aa). Residues 60 to 75 show a composition bias toward polar residues; that stretch reads AKTSNQNPQTKANLIT. Residues 76–79 form repeat 2; that stretch reads PQPP. Residue Ser103 is modified to Phosphoserine. Residues 120–129 are compositionally biased toward polar residues; it reads LQDSVAQSPA. Position 197 is a phosphothreonine (Thr197). Repeat 3 spans residues 240–243; sequence PSRP. Phosphoserine is present on residues Ser245 and Ser259. Cys644 is modified (cysteine methyl ester). Residue Cys644 is the site of S-farnesyl cysteine attachment. A propeptide spans 645–647 (removed in mature form); it reads TVS.

It belongs to the inositol polyphosphate 5-phosphatase family. In terms of assembly, interacts (when prenylated) with PDE6D; this is important for normal location in cilia. As to expression, highly expressed in testis, in pachytene and diplotene spermatocytes, but not in more mature elongating spermatids. Detected in neurons throughout the brain.

The protein localises to the cytoplasm. It localises to the cytoskeleton. Its subcellular location is the cilium axoneme. It is found in the golgi apparatus. The protein resides in the golgi stack membrane. The protein localises to the cell projection. It localises to the ruffle. Its subcellular location is the cell membrane. It is found in the nucleus. The catalysed reaction is a 1,2-diacyl-sn-glycero-3-phospho-(1D-myo-inositol-4,5-bisphosphate) + H2O = a 1,2-diacyl-sn-glycero-3-phospho-(1D-myo-inositol 4-phosphate) + phosphate. The enzyme catalyses a 1,2-diacyl-sn-glycero-3-phospho-(1D-myo-inositol-3,4,5-trisphosphate) + H2O = a 1,2-diacyl-sn-glycero-3-phospho-(1D-myo-inositol-3,4-bisphosphate) + phosphate. It carries out the reaction a 1,2-diacyl-sn-glycero-3-phospho-(1D-myo-inositol-3,5-bisphosphate) + H2O = a 1,2-diacyl-sn-glycero-3-phospho-(1D-myo-inositol-3-phosphate) + phosphate. Functionally, phosphatidylinositol (PtdIns) phosphatase that specifically hydrolyzes the 5-phosphate of phosphatidylinositol-3,4,5-trisphosphate (PtdIns(3,4,5)P3), phosphatidylinositol 4,5-bisphosphate (PtdIns(4,5)P2) and phosphatidylinositol 3,5-bisphosphate (PtdIns(3,5)P2). Specific for lipid substrates, inactive towards water soluble inositol phosphates. Specific for lipid substrates, inactive towards water soluble inositol phosphates. Plays an essential role in the primary cilium by controlling ciliary growth and phosphoinositide 3-kinase (PI3K) signaling and stability. The protein is Phosphatidylinositol polyphosphate 5-phosphatase type IV (Inpp5e) of Mus musculus (Mouse).